The primary structure comprises 239 residues: Leucine rich adaptor protein 1 (239 aa).

LRR repeat units follow at residues 55 to 83 (LGDK…LVTL) and 93 to 114 (LLEE…QYSL). Over residues 105–116 (SSLTSSQYSLTG) the composition is skewed to low complexity. The disordered stretch occupies residues 105–138 (SSLTSSQYSLTGGSPGRSRRGSWDSLPDTSSTDR). Phosphoserine occurs at positions 118, 126, and 129.

In terms of assembly, forms a tripartite complex with CDC42BPA/CDC42BPB and MYO18A acting as an adapter connecting both. Its binding to CDC42BPA/CDC42BPB results in their activation by abolition of their negative autoregulation. Interacts with CDC42BPA and CDC42BPB. Phosphorylated.

The protein resides in the cytoplasm. Its function is as follows. Acts as an activator of the canonical NF-kappa-B pathway and drive the production of pro-inflammatory cytokines. Promotes the antigen (Ag)-presenting and priming function of dendritic cells via the canonical NF-kappa-B pathway. In concert with MYO18A and CDC42BPA/CDC42BPB, is involved in modulating lamellar actomyosin retrograde flow that is crucial to cell protrusion and migration. Activates CDC42BPA/CDC42BPB and targets it to actomyosin through its interaction with MYO18A, leading to MYL9/MLC2 phosphorylation and MYH9/MYH10-dependent actomyosin assembly in the lamella. The polypeptide is Leucine rich adaptor protein 1 (Lurap1) (Mus musculus (Mouse)).